The chain runs to 84 residues: Acyl carrier protein homolog (84 aa).

In terms of domain architecture, Carrier spans 4–79; it reads RDILLKIKEI…ELIAEVKHLI (76 aa). Serine 39 is subject to O-(pantetheine 4'-phosphoryl)serine.

Post-translationally, 4'-phosphopantetheine is transferred from CoA to a specific serine of the apo-ACP-like protein.

It participates in lipid metabolism; fatty acid biosynthesis. Functionally, carrier of the growing fatty acid chain in fatty acid biosynthesis. This is Acyl carrier protein homolog from Mycoplasma pneumoniae (strain ATCC 29342 / M129 / Subtype 1) (Mycoplasmoides pneumoniae).